We begin with the raw amino-acid sequence, 1776 residues long: TOG array regulator of axonemal microtubules protein 1 (1776 aa).

TOG regions lie at residues 94–311 (EEET…RRLE) and 351–595 (PQEL…MPSS). HEAT repeat units lie at residues 175 to 212 (AFSLALLPQLVVSLREDNPALRKDALQILHICLRRSSG), 214 to 246 (VLRTLIQGLESPDARLRASTALLLPILFTPEDL), 250 to 288 (LDLTEVIISLARKLGDQEMEEESETAFSSLQQIGERLGQ), 344 to 383 (NLKFEIIPQELHARLLDQEDYKNRTQAVEELKQLLGKFNP), 389 to 426 (ASLVGFISLLYNLLDDSNFKVVHGTLQVLHLLVIRLGE), 430 to 465 (QFLGPVIAASVKVLADNKLVIKQEYMKIFLKLMKEV), 466 to 503 (GPQRVLSLLLENLKHKHSRVREEVVNICICSLLTYPSE), and 505 to 542 (FDLPKLSFDLAPALVDSKRRVRQAALEAFAVLASSMGS). 4 disordered regions span residues 655-676 (KNKLPWENEQPGVMGENQTSNS), 817-921 (ILPS…RGIN), 970-1000 (HSSLRSLRNSAAKKRAKLSGSSSTSDVDSPD), and 1062-1084 (TRLSSAKKTSHAAEQSPSAGFTR). Polar residues-rich tracts occupy residues 826–836 (PRTSPKHTSPL), 845–855 (DNSISFSNSWP), and 871–892 (LANQKSSDPTGENFQEKTTAVQ). Residues 988–1000 (SGSSSTSDVDSPD) show a composition bias toward low complexity. Positions 1259–1481 (DIALTEALRL…YIKESVKNLR (223 aa)) are TOG 3. 2 HEAT repeats span residues 1297 to 1334 (TKLHETTFAVVQEVKNLRSGVSRAAVVCLGDLFTYLKK) and 1338 to 1375 (QELDSAVRALLHKAGESNTFIREDVDKALKAMVNNVTP). Residues 1493 to 1536 (ASAKGRRSHPGSVGNTRSSSVSRDAFSSSEREVTEVREVPRKSA) form a disordered region. The span at 1509-1520 (RSSSVSRDAFSS) shows a compositional bias: low complexity. A compositionally biased stretch (basic and acidic residues) spans 1521-1533 (SEREVTEVREVPR). The segment at 1540 to 1776 (SLESAEYIKV…LLDVTVLSEL (237 aa)) is TOG 4. 3 HEAT repeats span residues 1541 to 1578 (LESAEYIKVITGLLNAKDFRDRINGIKQLLSDTENNQE), 1582 to 1619 (GNIVKIFDAFKSRLHDSNSKVNLVALETMHKMIPLLRD), and 1623 to 1661 (PIINMLIPAIVDNNLNSKNPGIYAAATNVVHALSQHVDN).

The protein belongs to the Crescerin family. As to quaternary structure, interacts with ARMC9. Interacts with CCDC66, CEP104 and CSPP1.

It localises to the cell projection. The protein localises to the cilium. The protein resides in the cytoplasm. Its subcellular location is the cytoskeleton. It is found in the cilium axoneme. Functionally, involved in ciliogenesis. It is required for appropriate acetylation and polyglutamylation of ciliary microtubules, and regulation of cilium length. Interacts with microtubules and promotes microtubule polymerization via its HEAT repeat domains, especially those in TOG region 2 and 4. In Mus musculus (Mouse), this protein is TOG array regulator of axonemal microtubules protein 1 (Togaram1).